Consider the following 105-residue polypeptide: Iron-sulfur cluster assembly protein CyaY (105 aa).

Belongs to the frataxin family.

Involved in iron-sulfur (Fe-S) cluster assembly. May act as a regulator of Fe-S biogenesis. This chain is Iron-sulfur cluster assembly protein CyaY, found in Psychromonas ingrahamii (strain DSM 17664 / CCUG 51855 / 37).